Consider the following 295-residue polypeptide: Elongation factor Ts (295 aa).

Residues 79 to 82 (TDFV) are involved in Mg(2+) ion dislocation from EF-Tu.

The protein belongs to the EF-Ts family.

Its subcellular location is the cytoplasm. Its function is as follows. Associates with the EF-Tu.GDP complex and induces the exchange of GDP to GTP. It remains bound to the aminoacyl-tRNA.EF-Tu.GTP complex up to the GTP hydrolysis stage on the ribosome. This chain is Elongation factor Ts, found in Bacillus cereus (strain B4264).